Consider the following 419-residue polypeptide: Putative zinc metalloprotease spyM18_2031 (419 aa).

Position 18 (His-18) interacts with Zn(2+). Glu-19 is an active-site residue. His-22 contacts Zn(2+). 4 consecutive transmembrane segments (helical) span residues 169 to 191 (LITNFAGPMNNFILGIVVFILLV), 301 to 323 (LAWSGAFTILNALKGLITGFSLN), 343 to 365 (LESVLSLMAMLSINLGIFNLIPI), and 392 to 411 (AYITLAGVAIMVVLMIAVTW). The 100-residue stretch at 175–274 (GPMNNFILGI…LKTVAVKPQK (100 aa)) folds into the PDZ domain.

Belongs to the peptidase M50B family. Zn(2+) serves as cofactor.

It localises to the cell membrane. The protein is Putative zinc metalloprotease spyM18_2031 of Streptococcus pyogenes serotype M18 (strain MGAS8232).